The sequence spans 540 residues: MYGIALDLGTSGFRTQLIDLETKETLKTVITMGHPLPGGNVMDHLDFAITTGEDVAHEVIIETIRRMFLQFDIDLSRVERLAVCGNPIQLSLFQNTEIRDLAYAGENKQKMLGVRNVKRDARVFPASEIFGEKYLSNCEIIVPPAIKHEIGADALAMMLETDFLIQPEPSLVTDYGTNAEMALKIGDRIITASAAAGPAIEGQGISSGMLASPGAICDVKPEGQYWRIIVLDREMEKQDAYLIDPVKGEIKDSYGFEAVGITGTGVISAFAMALKGGLIEKFPKLPNGKLILGPGIEITEKDVEEAGKAIGAIRAAHMTLIVESGIKYEDLEYAYMSGASGAYVDAEDARRLGAAPGYAKKIVQFGNTSLALARELVLEKSRLDDVIEIAKKITADHLMMATSETFNNFYLCELSYWTQGMPLETYDQMLELYGLPPLPKILEHVTIEKRVSKDIEEVGSGGLSILKEIGIILEVPVEKCVYCKKCVKECPEAALEIVERDGQRIAKYDSQKCLGTSCRRCVGVCPEDAIDITKLKITAK.

2 consecutive 4Fe-4S ferredoxin-type domains span residues 471–500 (IILEVPVEKCVYCKKCVKECPEAALEIVER) and 504–535 (RIAKYDSQKCLGTSCRRCVGVCPEDAIDITKL). [4Fe-4S] cluster contacts are provided by Cys-480, Cys-483, Cys-486, Cys-490, Cys-513, Cys-518, Cys-521, and Cys-525.

In terms of assembly, monomer. [4Fe-4S] cluster is required as a cofactor.

It carries out the reaction 2 Co(II)-[methylamine-specific corrinoid protein] + AH2 + ATP + H2O = 2 Co(I)-[methylamine-specific corrinoid protein] + A + ADP + phosphate + 3 H(+). It catalyses the reaction 2 Co(II)-[dimethylamine-specific corrinoid protein] + AH2 + ATP + H2O = 2 Co(I)-[dimethylamine-specific corrinoid protein] + A + ADP + phosphate + 3 H(+). The enzyme catalyses 2 Co(II)-[trimethylamine-specific corrinoid protein] + AH2 + ATP + H2O = 2 Co(I)-[trimethylamine-specific corrinoid protein] + A + ADP + phosphate + 3 H(+). Its pathway is one-carbon metabolism; methanogenesis from methylamine. It functions in the pathway one-carbon metabolism; methanogenesis from dimethylamine. The protein operates within one-carbon metabolism; methanogenesis from trimethylamine. In terms of biological role, reductase required for the activation of corrinoid-dependent methylamine methyltransferase reactions during methanogenesis. Mediates the ATP-dependent reduction of corrinoid proteins from the inactive cobalt(II) state to the active cobalt(I) state. Acts on the corrinoid proteins involved in methanogenesis from monomethylamine (MMA), dimethylamine (DMA) and trimethylamine (TMA), namely MtmC, MtbC and MttC, respectively. The protein is [Co(II) methylated amine-specific corrinoid protein] reductase of Methanosarcina barkeri.